The primary structure comprises 397 residues: Nuclear pore complex-interacting protein family member B2 (397 aa).

The segment at 256–397 (NRMGHQPPPP…KLRTGHCTQA (142 aa)) is disordered. Polar residues predominate over residues 267 to 277 (QQHSITDNSLS). Over residues 278–287 (LKTPPECLLT) the composition is skewed to low complexity. Basic residues predominate over residues 382–391 (KRRRLSKLRT).

Belongs to the NPIP family.

Its subcellular location is the nucleus. The protein is Nuclear pore complex-interacting protein family member B2 of Homo sapiens (Human).